The following is a 486-amino-acid chain: HTH-type transcriptional regulator PrpR (486 aa).

In terms of domain architecture, HTH cro/C1-type spans 22-76 (LRRLRQERGLTQVALAKALDLSTSYVNQLENDQRPITVPVLLLLTERFDLSAQYF). The segment at residues 33–52 (QVALAKALDLSTSYVNQLEN) is a DNA-binding region (H-T-H motif).

It belongs to the short-chain fatty acyl-CoA assimilation regulator (ScfR) family.

It functions in the pathway organic acid metabolism; propanoate degradation. It participates in steroid metabolism; cholesterol metabolism. In terms of biological role, plays a key role in regulating expression of enzymes involved in the catabolism of short chain fatty acids (SCFA) via both the glyoxylate (acetyl degradation route) and the methylcitrate cycle (propionate degradation route). Required for intracellular growth in macrophages and for the assimilation of cholesterol-derived propionate. PrpR acts as a transcriptional activator of prpDC and icl genes when propionate is the main carbon source, and as a ramB repressor. During growth on propionate, PrpR also acts as a transcriptional repressor of dnaA, which encodes the DnaA initiator protein responsible for initiating chromosomal replication. It is possibly involved in the regulation of genes responsible for controlling cholesterol utilization. The polypeptide is HTH-type transcriptional regulator PrpR (Mycobacterium tuberculosis (strain ATCC 25618 / H37Rv)).